The sequence spans 103 residues: Large ribosomal subunit protein bL21 (103 aa).

It belongs to the bacterial ribosomal protein bL21 family. In terms of assembly, part of the 50S ribosomal subunit. Contacts protein L20.

Its function is as follows. This protein binds to 23S rRNA in the presence of protein L20. The protein is Large ribosomal subunit protein bL21 of Idiomarina loihiensis (strain ATCC BAA-735 / DSM 15497 / L2-TR).